The chain runs to 250 residues: Methionine aminopeptidase (250 aa).

Residue histidine 77 coordinates substrate. Residues aspartate 94, aspartate 105, and histidine 169 each contribute to the a divalent metal cation site. Residue histidine 176 participates in substrate binding. Glutamate 202 and glutamate 235 together coordinate a divalent metal cation.

It belongs to the peptidase M24A family. Methionine aminopeptidase type 1 subfamily. Monomer. Co(2+) serves as cofactor. Requires Zn(2+) as cofactor. It depends on Mn(2+) as a cofactor. Fe(2+) is required as a cofactor.

The catalysed reaction is Release of N-terminal amino acids, preferentially methionine, from peptides and arylamides.. Functionally, removes the N-terminal methionine from nascent proteins. The N-terminal methionine is often cleaved when the second residue in the primary sequence is small and uncharged (Met-Ala-, Cys, Gly, Pro, Ser, Thr, or Val). Requires deformylation of the N(alpha)-formylated initiator methionine before it can be hydrolyzed. In Mycoplasmoides gallisepticum (strain R(low / passage 15 / clone 2)) (Mycoplasma gallisepticum), this protein is Methionine aminopeptidase.